We begin with the raw amino-acid sequence, 344 residues long: Hyoscyamine 6-dioxygenase (344 aa).

One can recognise a Fe2OG dioxygenase domain in the interval 193–293; the sequence is QIQMMLTNYY…RVSIATLIGP (101 aa). Fe cation contacts are provided by His-217, Asp-219, and His-274. Residue Arg-284 participates in 2-oxoglutarate binding.

It belongs to the iron/ascorbate-dependent oxidoreductase family. Monomer. Fe(2+) is required as a cofactor. L-ascorbate serves as cofactor. Post-translationally, the N-terminus is blocked. As to expression, root.

It catalyses the reaction L-hyoscyamine + 2-oxoglutarate + O2 = (6S)-6-hydroxyhyoscyamine + succinate + CO2. The protein operates within alkaloid biosynthesis; scopolamine biosynthesis. The chain is Hyoscyamine 6-dioxygenase (H6H) from Hyoscyamus niger (Black henbane).